The following is a 71-amino-acid chain: Small ribosomal subunit protein bS21 (71 aa).

The span at 48-59 (KAAAAVKRHAKK) shows a compositional bias: basic residues. Residues 48-71 (KAAAAVKRHAKKVQREQRRRERLY) are disordered. The span at 60–71 (VQREQRRRERLY) shows a compositional bias: basic and acidic residues.

The protein belongs to the bacterial ribosomal protein bS21 family.

The sequence is that of Small ribosomal subunit protein bS21 from Azotobacter vinelandii (strain DJ / ATCC BAA-1303).